The sequence spans 153 residues: SsrA-binding protein (153 aa).

Positions 132–142 are enriched in basic and acidic residues; sequence ALKRKEAEREA. A disordered region spans residues 132–153; sequence ALKRKEAEREAQSAMKRYAKGY.

Belongs to the SmpB family.

Its subcellular location is the cytoplasm. Its function is as follows. Required for rescue of stalled ribosomes mediated by trans-translation. Binds to transfer-messenger RNA (tmRNA), required for stable association of tmRNA with ribosomes. tmRNA and SmpB together mimic tRNA shape, replacing the anticodon stem-loop with SmpB. tmRNA is encoded by the ssrA gene; the 2 termini fold to resemble tRNA(Ala) and it encodes a 'tag peptide', a short internal open reading frame. During trans-translation Ala-aminoacylated tmRNA acts like a tRNA, entering the A-site of stalled ribosomes, displacing the stalled mRNA. The ribosome then switches to translate the ORF on the tmRNA; the nascent peptide is terminated with the 'tag peptide' encoded by the tmRNA and targeted for degradation. The ribosome is freed to recommence translation, which seems to be the essential function of trans-translation. The sequence is that of SsrA-binding protein from Campylobacter hominis (strain ATCC BAA-381 / DSM 21671 / CCUG 45161 / LMG 19568 / NCTC 13146 / CH001A).